Here is a 453-residue protein sequence, read N- to C-terminus: Crh-like protein CRH11 (453 aa).

A signal peptide spans 1–21 (MKFTTLATIASTLLFAANANA). An intrachain disulfide couples Cys24 to Cys32. The GH16 domain maps to 28 to 227 (KSSDCSPVPA…WAGGITDYSQ (200 aa)). Residue Glu119 is the Nucleophile of the active site. Glu123 functions as the Proton donor in the catalytic mechanism. Chitin contacts are provided by Glu123, Trp204, and Thr215. 3 disordered regions span residues 281-343 (LESG…SEKS), 362-397 (KTTV…PASA), and 410-430 (GDAA…TENN). Composition is skewed to low complexity over residues 286–343 (SVDS…SEKS), 363–397 (TTVT…PASA), and 412–425 (AAPS…PSVS). Asn290 carries N-linked (GlcNAc...) asparagine glycosylation. Asn430 carries GPI-anchor amidated asparagine lipidation. Positions 431–453 (GAVSVAKTTSLFGFVALIGFLFV) are cleaved as a propeptide — removed in mature form.

It belongs to the glycosyl hydrolase 16 family. CRH1 subfamily. The GPI-anchor is attached to the protein in the endoplasmic reticulum and serves to target the protein to the cell surface. There, the glucosamine-inositol phospholipid moiety is cleaved off and the GPI-modified mannoprotein is covalently attached via its lipidless GPI glycan remnant to the 1,6-beta-glucan of the outer cell wall layer.

It is found in the secreted. Its subcellular location is the cell wall. The protein resides in the membrane. It catalyses the reaction Random endo-hydrolysis of N-acetyl-beta-D-glucosaminide (1-&gt;4)-beta-linkages in chitin and chitodextrins.. Dual chitinase/transglycosylase that plays a role in cell wall architecture. Chitinase and transglycosylase activities are coupled. Required for the polysaccharide cross-linking at the septa and the cell wall. More specifically, transfers chitin to 1,6-beta-glucan in the cell wall. Plays an important role in fungal pathogenesis via its functions in cell wall assembly and regeneration, filamentation, and adherence to host cells. This is Crh-like protein CRH11 (CRH11) from Candida albicans (strain SC5314 / ATCC MYA-2876) (Yeast).